Consider the following 141-residue polypeptide: Hemoglobin subunit alpha-D (141 aa).

One can recognise a Globin domain in the interval 1-141 (MLTAEDKKLI…VAAVLAEKYR (141 aa)). Heme b-binding residues include His58 and His87.

It belongs to the globin family. As to quaternary structure, heterotetramer of two alpha-D chains and two beta chains. In terms of tissue distribution, red blood cells.

Its function is as follows. Involved in oxygen transport from the lung to the various peripheral tissues. This is Hemoglobin subunit alpha-D (HBAD) from Accipiter gentilis (Northern goshawk).